Consider the following 119-residue polypeptide: Protein FATTY ACID EXPORT 6 (119 aa).

The next 3 helical transmembrane spans lie at 27 to 47 (SITS…AGYI), 57 to 77 (NSTI…LVMG), and 84 to 104 (GKIM…CFYV).

Belongs to the TMEM14 family.

It localises to the membrane. In terms of biological role, may be involved in free fatty acids export. This is Protein FATTY ACID EXPORT 6 from Arabidopsis thaliana (Mouse-ear cress).